Here is a 510-residue protein sequence, read N- to C-terminus: Histidine ammonia-lyase (510 aa).

Positions 143–145 form a cross-link, 5-imidazolinone (Ala-Gly); sequence ASG. 2,3-didehydroalanine (Ser) is present on Ser144.

It belongs to the PAL/histidase family. In terms of processing, contains an active site 4-methylidene-imidazol-5-one (MIO), which is formed autocatalytically by cyclization and dehydration of residues Ala-Ser-Gly.

It is found in the cytoplasm. The enzyme catalyses L-histidine = trans-urocanate + NH4(+). It functions in the pathway amino-acid degradation; L-histidine degradation into L-glutamate; N-formimidoyl-L-glutamate from L-histidine: step 1/3. The sequence is that of Histidine ammonia-lyase from Pseudomonas putida (strain ATCC 47054 / DSM 6125 / CFBP 8728 / NCIMB 11950 / KT2440).